Reading from the N-terminus, the 341-residue chain is Mytilin-2 (341 aa).

The N-terminal stretch at 1 to 24 (MFKQSYQLCLVFLLFVCFYQSVKG) is a signal peptide.

As to expression, component of the organic matrix of calcified shell layers like nacre and prisms.

The protein resides in the secreted. This is Mytilin-2 from Mytilus californianus (California mussel).